The chain runs to 400 residues: Formate-dependent phosphoribosylglycinamide formyltransferase (400 aa).

Residues E22–L23 and E82 each bind N(1)-(5-phospho-beta-D-ribosyl)glycinamide. ATP-binding positions include R115, K156, S161–Q166, E196–I199, and E204. Residues R120 to L309 form the ATP-grasp domain. Positions 268 and 280 each coordinate Mg(2+). Residues D287, K361, and R368–R369 contribute to the N(1)-(5-phospho-beta-D-ribosyl)glycinamide site.

It belongs to the PurK/PurT family. As to quaternary structure, homodimer.

The catalysed reaction is N(1)-(5-phospho-beta-D-ribosyl)glycinamide + formate + ATP = N(2)-formyl-N(1)-(5-phospho-beta-D-ribosyl)glycinamide + ADP + phosphate + H(+). The protein operates within purine metabolism; IMP biosynthesis via de novo pathway; N(2)-formyl-N(1)-(5-phospho-D-ribosyl)glycinamide from N(1)-(5-phospho-D-ribosyl)glycinamide (formate route): step 1/1. Functionally, involved in the de novo purine biosynthesis. Catalyzes the transfer of formate to 5-phospho-ribosyl-glycinamide (GAR), producing 5-phospho-ribosyl-N-formylglycinamide (FGAR). Formate is provided by PurU via hydrolysis of 10-formyl-tetrahydrofolate. This is Formate-dependent phosphoribosylglycinamide formyltransferase from Xanthomonas oryzae pv. oryzae (strain KACC10331 / KXO85).